A 535-amino-acid polypeptide reads, in one-letter code: Ribonuclease Y (535 aa).

A helical transmembrane segment spans residues 4–24 (IILAMVCALIGLIIGYVAISM). The tract at residues 107 to 145 (TDRASSLDRKDENLSNKEKMLDSKEQSLTDKSRHINERE) is disordered. Residues 225 to 285 (TITTVHLPDD…IRREIARMTL (61 aa)) form the KH domain. Positions 351–444 (VLRHSVEVGK…VAAADALSSA (94 aa)) constitute an HD domain.

It belongs to the RNase Y family.

It is found in the cell membrane. Endoribonuclease that initiates mRNA decay. The protein is Ribonuclease Y of Streptococcus agalactiae serotype Ia (strain ATCC 27591 / A909 / CDC SS700).